A 128-amino-acid chain; its full sequence is Ribonuclease pancreatic (128 aa).

A compositionally biased stretch (basic and acidic residues) spans 1–13; the sequence is KESPAMKFERQHM. Positions 1 to 26 are disordered; it reads KESPAMKFERQHMDSGSTSSSNPTYC. Substrate-binding residues include lysine 7 and arginine 10. The active-site Proton acceptor is the histidine 12. Residues 14–26 are compositionally biased toward polar residues; the sequence is DSGSTSSSNPTYC. Cystine bridges form between cysteine 26-cysteine 84, cysteine 40-cysteine 95, cysteine 58-cysteine 110, and cysteine 65-cysteine 72. The N-linked (GlcNAc...) asparagine glycan is linked to asparagine 34. 41-45 serves as a coordination point for substrate; that stretch reads KPVNT. Asparagine 62 is a glycosylation site (N-linked (GlcNAc...) asparagine). Residues lysine 66 and arginine 85 each coordinate substrate. Histidine 119 functions as the Proton donor in the catalytic mechanism.

This sequence belongs to the pancreatic ribonuclease family. As to quaternary structure, monomer. Interacts with and forms tight 1:1 complexes with RNH1. Dimerization of two such complexes may occur. Interaction with RNH1 inhibits this protein. In terms of tissue distribution, pancreas.

It localises to the secreted. The catalysed reaction is an [RNA] containing cytidine + H2O = an [RNA]-3'-cytidine-3'-phosphate + a 5'-hydroxy-ribonucleotide-3'-[RNA].. It catalyses the reaction an [RNA] containing uridine + H2O = an [RNA]-3'-uridine-3'-phosphate + a 5'-hydroxy-ribonucleotide-3'-[RNA].. Functionally, endonuclease that catalyzes the cleavage of RNA on the 3' side of pyrimidine nucleotides. Acts on single-stranded and double-stranded RNA. In Equus caballus (Horse), this protein is Ribonuclease pancreatic (RNASE1).